We begin with the raw amino-acid sequence, 99 residues long: Aspartyl/glutamyl-tRNA(Asn/Gln) amidotransferase subunit C (99 aa).

It belongs to the GatC family. Heterotrimer of A, B and C subunits.

It carries out the reaction L-glutamyl-tRNA(Gln) + L-glutamine + ATP + H2O = L-glutaminyl-tRNA(Gln) + L-glutamate + ADP + phosphate + H(+). It catalyses the reaction L-aspartyl-tRNA(Asn) + L-glutamine + ATP + H2O = L-asparaginyl-tRNA(Asn) + L-glutamate + ADP + phosphate + 2 H(+). Its function is as follows. Allows the formation of correctly charged Asn-tRNA(Asn) or Gln-tRNA(Gln) through the transamidation of misacylated Asp-tRNA(Asn) or Glu-tRNA(Gln) in organisms which lack either or both of asparaginyl-tRNA or glutaminyl-tRNA synthetases. The reaction takes place in the presence of glutamine and ATP through an activated phospho-Asp-tRNA(Asn) or phospho-Glu-tRNA(Gln). This chain is Aspartyl/glutamyl-tRNA(Asn/Gln) amidotransferase subunit C, found in Paracidovorax citrulli (strain AAC00-1) (Acidovorax citrulli).